A 1187-amino-acid chain; its full sequence is Phospholipid-transporting ATPase IH (1187 aa).

Topologically, residues 1–61 (MDCSLLRTLV…SSKYTFWNFI (61 aa)) are cytoplasmic. A helical membrane pass occupies residues 62-82 (PKNLFEQFRRIANFYFLIIFL). Topologically, residues 83–88 (VQLIID) are extracellular. Residues 89–110 (TPTSPVTSGLPLFFVITVTAIK) form a helical membrane-spanning segment. The Cytoplasmic segment spans residues 111–296 (QGYEDWLRHK…SAVEKSMNTF (186 aa)). A helical membrane pass occupies residues 297–318 (LIVYLCILVSKALINTVLKYVW). The Extracellular portion of the chain corresponds to 319-349 (QSEPFRDEPWYNEKTESERQRNLFLRAFTDF). The chain crosses the membrane as a helical span at residues 350-372 (LAFMVLFNYIIPVSMYVTVEMQK). Residues 373-884 (FLGSYFITWD…GHFYYIRISE (512 aa)) lie on the Cytoplasmic side of the membrane. D414 (4-aspartylphosphate intermediate) is an active-site residue. 10 residues coordinate ATP: D414, K415, T416, E513, F555, K578, R609, T689, G690, and D691. Mg(2+) is bound at residue D414. T416 is a binding site for Mg(2+). At S740 the chain carries Phosphoserine. Positions 801 and 807 each coordinate ATP. Residue D828 participates in Mg(2+) binding. Positions 831 and 832 each coordinate ATP. D832 contacts Mg(2+). Residues 885–905 (LVQYFFYKNVCFIFPQFLYQF) traverse the membrane as a helical segment. The Extracellular portion of the chain corresponds to 906–917 (FCGFSQQTLYDT). A helical transmembrane segment spans residues 918-937 (AYLTLYNISFTSLPILLYSL). Residues 938-967 (MEQHVGIDVLKRDPTLYRDIAKNALLRWRV) are Cytoplasmic-facing. A helical transmembrane segment spans residues 968-989 (FIYWTFLGVFDALVFFFGAYFI). Over 990–1003 (FENTTVTINGQMFG) the chain is Extracellular. The helical transmembrane segment at 1004 to 1026 (NWTFGTLVFTVMVLTVTLKLALD) threads the bilayer. Over 1027–1032 (THYWTW) the chain is Cytoplasmic. The chain crosses the membrane as a helical span at residues 1033 to 1053 (INHFVIWGSLLFYIAFSLLWG). Topologically, residues 1054-1071 (GVIWPFLSYQRMYYVFIS) are extracellular. The chain crosses the membrane as a helical span at residues 1072–1096 (MLSSGPAWLGIILLVTVGLLPDVLK). At 1097–1138 (KVLCRQLWPTATERTQNIQHQDSISEFTPLASLPSWGAQGSR) the chain is on the cytoplasmic side. S1148 and S1158 each carry phosphoserine.

Belongs to the cation transport ATPase (P-type) (TC 3.A.3) family. Type IV subfamily. In terms of assembly, component of a P4-ATPase flippase complex which consists of a catalytic alpha subunit ATP11A and an accessory beta subunit TMEM30A. It depends on Mg(2+) as a cofactor. Proteolytically cleaved by CASP3. Widely expressed. Expressed in myoblasts. Expressed in retina, brain, liver, testes and kidney (at protein level). Expressed in the inner ear.

It localises to the cell membrane. The protein localises to the early endosome. The protein resides in the recycling endosome. Its subcellular location is the endoplasmic reticulum membrane. It catalyses the reaction ATP + H2O + phospholipidSide 1 = ADP + phosphate + phospholipidSide 2.. The enzyme catalyses a 1,2-diacyl-sn-glycero-3-phospho-L-serine(out) + ATP + H2O = a 1,2-diacyl-sn-glycero-3-phospho-L-serine(in) + ADP + phosphate + H(+). It carries out the reaction a 1,2-diacyl-sn-glycero-3-phosphoethanolamine(out) + ATP + H2O = a 1,2-diacyl-sn-glycero-3-phosphoethanolamine(in) + ADP + phosphate + H(+). Its function is as follows. Catalytic component of a P4-ATPase flippase complex which catalyzes the hydrolysis of ATP coupled to the transport of aminophospholipids, phosphatidylserines (PS) and phosphatidylethanolamines (PE), from the outer to the inner leaflet of the plasma membrane. Does not show flippase activity toward phosphatidylcholine (PC). Contributes to the maintenance of membrane lipid asymmetry with a specific role in morphogenesis of muscle cells. In myoblasts, mediates PS enrichment at the inner leaflet of plasma membrane, triggering PIEZO1-dependent Ca2+ influx and Rho GTPases signal transduction, subsequently leading to the assembly of cortical actomyosin fibers and myotube formation. This is Phospholipid-transporting ATPase IH (Atp11a) from Mus musculus (Mouse).